We begin with the raw amino-acid sequence, 36 residues long: U-limacoditoxin(7)-Dv63 (36 aa).

The first 19 residues, 1-19 (MFKPRVILLITIIAVFSEF), serve as a signal peptide directing secretion.

It belongs to the limacoditoxin-7 family. Expressed by the venom secretory cell of the spine. The spine is a cuticular structure containing a single large nucleated venom-secreting cell at its base. It is an independent unit capable of producing, storing and injecting venom. On the back of D.vulnerans caterpillars, spines are grouped together by 50 to 100 to form scoli, of which there are eight in D.vulnerans.

It localises to the secreted. Peptide with insecticidal and antiparasitic activities. Induces irreversible paralysis in D.melanogaster when tested at high doses. It shows a moderate antiparasitic activity against the major pathogenic nematode of ruminants (H.contortus, EC(50)=41.3 uM). Does not show antimicrobial activities. Does not induce increase in intracellular calcium in mouse DRG neurons, suggesting that it does not induce pain. The chain is U-limacoditoxin(7)-Dv63 from Doratifera vulnerans (Mottled cup moth).